Consider the following 82-residue polypeptide: Kappa-actitoxin-Avd4j (82 aa).

The N-terminal stretch at 1–19 (MNKALFLCLVVLCAAVVFA) is a signal peptide. Residues 20-31 (AEDLQKAKHAPF) constitute a propeptide that is removed on maturation. 3 disulfide bridges follow: cysteine 38-cysteine 73, cysteine 40-cysteine 66, and cysteine 56-cysteine 74.

This sequence belongs to the sea anemone type 3 (BDS) potassium channel toxin family. In terms of tissue distribution, weakly expressed in the ectodermal tissue from the distal and proximal tentacles, body wall, and oral disk.

It is found in the secreted. The protein resides in the nematocyst. In terms of biological role, blocks Kv3 voltage-gated potassium channels. Reduces blood pressure. This Anemonia viridis (Snakelocks anemone) protein is Kappa-actitoxin-Avd4j.